The primary structure comprises 586 residues: Septin-9 (586 aa).

At M1 the chain carries N-acetylmethionine. Residues 1–14 (MKKSYSGGTRTSSG) are compositionally biased toward low complexity. Disordered stretches follow at residues 1–49 (MKKS…RVQT), 62–108 (KFQD…SRRT), and 134–268 (RAEV…PASR). Phosphoserine is present on residues S22 and S30. Phosphothreonine occurs at positions 38, 42, and 49. The residue at position 62 (K62) is an N6-acetyllysine. Residues S82, S85, S89, and S96 each carry the phosphoserine modification. Residues 134 to 151 (RAEVLGHKTPEPAPRRTE) show a composition bias toward basic and acidic residues. T142 carries the post-translational modification Phosphothreonine. Phosphotyrosine is present on Y278. The Septin-type G domain maps to 295–567 (QGFEFNIMVV…EAYRVKRLNE (273 aa)). The tract at residues 305–312 (GQSGLGKS) is G1 motif. Position 305–312 (305–312 (GQSGLGKS)) interacts with GTP. Phosphoserine occurs at positions 327 and 332. GTP-binding positions include T339, G365, 445–453 (KADTLTLEE), G501, and R516. The tract at residues 362 to 365 (DTPG) is G3 motif. Residues 444-447 (AKAD) form a G4 motif region.

This sequence belongs to the TRAFAC class TrmE-Era-EngA-EngB-Septin-like GTPase superfamily. Septin GTPase family. As to quaternary structure, septins polymerize into heterooligomeric protein complexes that form filaments, and associate with cellular membranes, actin filaments, and microtubules. GTPase activity is required for filament formation. Interacts with SEPTIN2, SEPTIN6, SEPTIN7, SEPTIN11 and SEPTIN14. Interacts with RTKN and ARHGEF18. In a mesenchymal cell line, Rho/RTKN signals cause disruption of wild-type septin filaments, but not of those containing isoform 2 variants HNA Trp-106 and Phe-111. In a mesenchymal cell line, isoform 2 variants HNA Trp-106 and Phe-111, but not wild type, form filaments with SEPTIN4. In terms of tissue distribution, widely expressed. Isoforms are differentially expressed in testes, kidney, liver heart, spleen, brain, peripheral blood leukocytes, skeletal muscle and kidney. Specific isoforms appear to demonstrate tissue specificity. Isoform 5 is the most highly expressed in fetal tissue. Isoform 1 is detected in all tissues except the brain and thymus, while isoform 2, isoform 3, and isoform 4 are detected at low levels in approximately half of the fetal tissues.

The protein resides in the cytoplasm. The protein localises to the cytoskeleton. Its function is as follows. Filament-forming cytoskeletal GTPase. May play a role in cytokinesis (Potential). May play a role in the internalization of 2 intracellular microbial pathogens, Listeria monocytogenes and Shigella flexneri. In Homo sapiens (Human), this protein is Septin-9.